A 465-amino-acid polypeptide reads, in one-letter code: Catalase cnsD (465 aa).

His-39 is a catalytic residue. Tyr-331 provides a ligand contact to heme.

It belongs to the catalase family. Heme is required as a cofactor.

It participates in alkaloid biosynthesis. Its function is as follows. Catalase; part of the gene cluster that mediates the biosynthesis of communesins, a prominent class of indole alkaloids with great potential as pharmaceuticals. Communesins are biosynthesized by the coupling of tryptamine and aurantioclavine, two building blocks derived from L-tryptophan. The L-tryptophan decarboxylase cnsB converts L-tryptophan to tryptamine, whereas the tryptophan dimethylallyltransferase cnsF converts L-tryptophan to 4-dimethylallyl tryptophan which is further transformed to aurantioclavine by the aurantioclavine synthase cnsA, probably aided by the catalase cnsD. The cytochrome P450 monooxygenase cnsC catalyzes the heterodimeric coupling between the two different indole moieties, tryptamine and aurantioclavine, to construct vicinal quaternary stereocenters and yield the heptacyclic communesin scaffold. The O-methyltransferase cnsE then methylates the communesin scaffold to produce communesin K, the simplest characterized communesin that contains the heptacyclic core. The dioxygenase cnsJ converts communesin K into communesin I. Acylation to introduce the hexadienyl group at position N16 of communesin I by the acyltransferase cnsK leads to the production of communesin B. The hexadienyl group is produced by the highly reducing polyketide synthase cnsI, before being hydrolytically removed from cnsI by the serine hydrolase cnsH, converted into hexadienyl-CoA by the CoA ligase cnsG, and then transferred to communesin I by cnsK. Surprisingly, cnsK may also be a promiscuous acyltransferase that can tolerate a range of acyl groups, including acetyl-, propionyl-, and butyryl-CoA, which lead to communesins A, G and H respectively. The roles of the alpha-ketoglutarate-dependent dioxygenases cnsM and cnsP have still to be determined. This chain is Catalase cnsD, found in Penicillium expansum (Blue mold rot fungus).